Here is a 336-residue protein sequence, read N- to C-terminus: Atypical chemokine receptor 1 (336 aa).

Residues 1–63 (MGNCLHTAEL…CNLLDDSALP (63 aa)) lie on the Extracellular side of the membrane. Asn16, Asn27, and Asn33 each carry an N-linked (GlcNAc...) asparagine glycan. 2 cysteine pairs are disulfide-bonded: Cys51/Cys276 and Cys129/Cys195. The chain crosses the membrane as a helical span at residues 64–84 (FFILTSVLGILASSTVLFILF). The Cytoplasmic segment spans residues 85–95 (RPLFRWQLCPG). Residues 96–116 (WPVLAQLAVGSALFSIVVPIL) form a helical membrane-spanning segment. Residues 117-129 (APGLGSTHSSALC) lie on the Extracellular side of the membrane. Residues 130–153 (SLGYCVWYGSAFAQALLLGCHASL) form a helical membrane-spanning segment. The Cytoplasmic segment spans residues 154–166 (GHRLGAGQVPGLT). Residues 167-187 (LGLTVGIWGVAALLTLPVTLA) form a helical membrane-spanning segment. At 188-207 (SGASGGLCTPIHSTELKALQ) the chain is on the extracellular side. The chain crosses the membrane as a helical span at residues 208–228 (ATHTVACLAIFVLLPLGLFGA). At 229-244 (KGLKKALGMGPGPWMN) the chain is on the cytoplasmic side. A helical membrane pass occupies residues 245-265 (ILWAWFIFWWPHGVVLGLDFL). Topologically, residues 266–287 (VRSKLLLLSTCLAQQALDLLLN) are extracellular. The helical transmembrane segment at 288–308 (LAEALAILHCVATPLILALFY) threads the bilayer. Residues 309–336 (HQATRTLLPSLPLPEGWSSHLDTLGSKS) are Cytoplasmic-facing.

The protein belongs to the G-protein coupled receptor 1 family. Atypical chemokine receptor subfamily.

It localises to the early endosome. It is found in the recycling endosome. Its subcellular location is the membrane. Atypical chemokine receptor that controls chemokine levels and localization via high-affinity chemokine binding that is uncoupled from classic ligand-driven signal transduction cascades, resulting instead in chemokine sequestration, degradation, or transcytosis. Also known as interceptor (internalizing receptor) or chemokine-scavenging receptor or chemokine decoy receptor. Has a promiscuous chemokine-binding profile, interacting with inflammatory chemokines of both the CXC and the CC subfamilies but not with homeostatic chemokines. Acts as a receptor for chemokines including CCL2, CCL5, CCL7, CCL11, CCL13, CCL14, CCL17, CXCL5, CXCL6, IL8/CXCL8, CXCL11, GRO, RANTES, MCP-1 and TARC. May regulate chemokine bioavailability and, consequently, leukocyte recruitment through two distinct mechanisms: when expressed in endothelial cells, it sustains the abluminal to luminal transcytosis of tissue-derived chemokines and their subsequent presentation to circulating leukocytes; when expressed in erythrocytes, serves as blood reservoir of cognate chemokines but also as a chemokine sink, buffering potential surges in plasma chemokine levels. The protein is Atypical chemokine receptor 1 (ACKR1) of Gorilla gorilla gorilla (Western lowland gorilla).